A 272-amino-acid polypeptide reads, in one-letter code: Ribonuclease 3 (272 aa).

A compositionally biased stretch (polar residues) spans 1-20; the sequence is MTDDVTNVEQPSTASEQQPQ. Positions 1–38 are disordered; the sequence is MTDDVTNVEQPSTASEQQPQDVPAAEPSAAKKRRANKA. In terms of domain architecture, RNase III spans 44-171; the sequence is AAAIEQRLGH…VIGAIYLDGG (128 aa). E84 lines the Mg(2+) pocket. Residue D88 is part of the active site. Mg(2+)-binding residues include D157 and E160. E160 is an active-site residue. One can recognise a DRBM domain in the interval 196–265; it reads DPKTVLQEWA…ASAMLAREGV (70 aa).

Belongs to the ribonuclease III family. In terms of assembly, homodimer. The cofactor is Mg(2+).

It localises to the cytoplasm. It carries out the reaction Endonucleolytic cleavage to 5'-phosphomonoester.. Digests double-stranded RNA. Involved in the processing of primary rRNA transcript to yield the immediate precursors to the large and small rRNAs (23S and 16S). Processes some mRNAs, and tRNAs when they are encoded in the rRNA operon. Processes pre-crRNA and tracrRNA of type II CRISPR loci if present in the organism. The protein is Ribonuclease 3 of Rhodopseudomonas palustris (strain ATCC BAA-98 / CGA009).